Reading from the N-terminus, the 541-residue chain is DNA ligase 1 (541 aa).

Residue glutamate 234 participates in ATP binding. The active-site N6-AMP-lysine intermediate is the lysine 236. ATP-binding residues include arginine 241, arginine 256, glutamate 286, phenylalanine 325, arginine 398, and lysine 404.

It belongs to the ATP-dependent DNA ligase family. Requires Mg(2+) as cofactor.

It carries out the reaction ATP + (deoxyribonucleotide)n-3'-hydroxyl + 5'-phospho-(deoxyribonucleotide)m = (deoxyribonucleotide)n+m + AMP + diphosphate.. DNA ligase that seals nicks in double-stranded DNA during DNA replication, DNA recombination and DNA repair. The protein is DNA ligase 1 of Korarchaeum cryptofilum (strain OPF8).